Reading from the N-terminus, the 435-residue chain is Glutamyl-tRNA reductase (435 aa).

Substrate-binding positions include 50 to 53 (TCNR), serine 110, 115 to 117 (ETQ), and glutamine 121. Cysteine 51 functions as the Nucleophile in the catalytic mechanism. An NADP(+)-binding site is contributed by 189–194 (GAGEMS).

Belongs to the glutamyl-tRNA reductase family. As to quaternary structure, homodimer.

The catalysed reaction is (S)-4-amino-5-oxopentanoate + tRNA(Glu) + NADP(+) = L-glutamyl-tRNA(Glu) + NADPH + H(+). It functions in the pathway porphyrin-containing compound metabolism; protoporphyrin-IX biosynthesis; 5-aminolevulinate from L-glutamyl-tRNA(Glu): step 1/2. Functionally, catalyzes the NADPH-dependent reduction of glutamyl-tRNA(Glu) to glutamate 1-semialdehyde (GSA). The protein is Glutamyl-tRNA reductase of Campylobacter lari (strain RM2100 / D67 / ATCC BAA-1060).